Here is a 180-residue protein sequence, read N- to C-terminus: Large ribosomal subunit protein uL15 (180 aa).

The segment at 1-62 is disordered; it reads MKKERLEQAA…KTAGRGSKGQ (62 aa). The span at 35-44 shows a compositional bias: basic residues; the sequence is GAKKEKKRVG.

The protein belongs to the universal ribosomal protein uL15 family. In terms of assembly, part of the 50S ribosomal subunit.

Binds to the 23S rRNA. The sequence is that of Large ribosomal subunit protein uL15 from Leptospira borgpetersenii serovar Hardjo-bovis (strain JB197).